A 560-amino-acid chain; its full sequence is Leiomodin-3 (560 aa).

The interval Met1 to Pro49 is interaction with tropomyosin alpha. Residues Glu16 to Met42 are a coiled coil. Disordered regions lie at residues Asp45 to His68 and Ile127 to Asp217. Residues Glu142–Glu167 show a composition bias toward acidic residues. The span at Glu168 to Arg182 shows a compositional bias: basic and acidic residues. Residues Asn183–Thr192 show a composition bias toward polar residues. The segment covering Lys194 to Asp217 has biased composition (basic and acidic residues). Residues Val386 to Gly425 are a coiled coil. Disordered stretches follow at residues Pro437–Thr480 and Gln494–Val530. Positions Gln448–Gln458 are enriched in pro residues. Positions Arg498–Lys516 are enriched in basic and acidic residues. The WH2 domain occupies Pro534–Val553.

The protein belongs to the tropomodulin family. May interact with tropomyosin alpha (TPM1/2) N-terminus. Interacts with KLHL40; leading to stabilization. In terms of processing, ubiquitinated, leading to its degradation. Interaction with KLHL40 negatively regulates ubiquitination and degradation. In terms of tissue distribution, expressed in cardiac and at higher levels in skeletal muscles (at protein level).

Its subcellular location is the cytoplasm. It is found in the myofibril. It localises to the sarcomere. The protein resides in the m line. The protein localises to the a band. Its subcellular location is the cytoskeleton. In terms of biological role, essential for the organization of sarcomeric actin thin filaments in skeletal muscle. Increases the rate of actin polymerization. The protein is Leiomodin-3 (LMOD3) of Homo sapiens (Human).